The chain runs to 267 residues: Mediator of RNA polymerase II transcription subunit 8 (267 aa).

Coiled coils occupy residues 2 to 27 (QQRE…KGSL) and 118 to 163 (VEEQ…EDRD). Residues 156–165 (NNPREDRDSE) are compositionally biased toward basic and acidic residues. Disordered regions lie at residues 156 to 180 (NNPR…NPAD) and 227 to 267 (ASGH…PYNR). A compositionally biased stretch (polar residues) spans 166–180 (TSALRQNKPSFNPAD). Over residues 236-247 (GPVAPQQPGQPG) the composition is skewed to low complexity.

This sequence belongs to the Mediator complex subunit 8 family. Component of the Mediator complex. May be part of a multisubunit E3 ubiquitin-protein ligase complex.

The protein resides in the nucleus. It functions in the pathway protein modification; protein ubiquitination. Its function is as follows. Component of the Mediator complex, a coactivator involved in the regulated transcription of nearly all RNA polymerase II-dependent genes. Mediator functions as a bridge to convey information from gene-specific regulatory proteins to the basal RNA polymerase II transcription machinery. Mediator is recruited to promoters by direct interactions with regulatory proteins and serves as a scaffold for the assembly of a functional preinitiation complex with RNA polymerase II and the general transcription factors. May play a role as a target recruitment subunit in E3 ubiquitin-protein ligase complexes and thus in ubiquitination and subsequent proteasomal degradation of target proteins. This chain is Mediator of RNA polymerase II transcription subunit 8 (med8), found in Danio rerio (Zebrafish).